A 466-amino-acid polypeptide reads, in one-letter code: Cytochrome P450 85A (466 aa).

The chain crosses the membrane as a helical span at residues 2–22; the sequence is ALFMAILGVLVLLLCLCSALL. Residue Cys-414 participates in heme binding.

This sequence belongs to the cytochrome P450 family. It depends on heme as a cofactor.

It is found in the membrane. In terms of biological role, catalyzes the C6-oxidation step in brassinosteroids biosynthesis. In Phaseolus vulgaris (Kidney bean), this protein is Cytochrome P450 85A.